We begin with the raw amino-acid sequence, 221 residues long: ATP-dependent dethiobiotin synthetase BioD (221 aa).

Glycine 11–tyrosine 16 contributes to the ATP binding site. Residue threonine 15 participates in Mg(2+) binding. Lysine 36 is an active-site residue. Threonine 40 contributes to the substrate binding site. Residues aspartate 48 and glutamate 107–glycine 110 contribute to the ATP site. Mg(2+) contacts are provided by aspartate 48 and glutamate 107.

The protein belongs to the dethiobiotin synthetase family. In terms of assembly, homodimer. Mg(2+) serves as cofactor.

It localises to the cytoplasm. It carries out the reaction (7R,8S)-7,8-diammoniononanoate + CO2 + ATP = (4R,5S)-dethiobiotin + ADP + phosphate + 3 H(+). It participates in cofactor biosynthesis; biotin biosynthesis; biotin from 7,8-diaminononanoate: step 1/2. In terms of biological role, catalyzes a mechanistically unusual reaction, the ATP-dependent insertion of CO2 between the N7 and N8 nitrogen atoms of 7,8-diaminopelargonic acid (DAPA, also called 7,8-diammoniononanoate) to form a ureido ring. This is ATP-dependent dethiobiotin synthetase BioD from Hydrogenobaculum sp. (strain Y04AAS1).